The following is a 366-amino-acid chain: Ribosomal RNA large subunit methyltransferase M (366 aa).

S-adenosyl-L-methionine-binding positions include S188, 221–224, D240, D260, and D277; that span reads CPGG. K306 serves as the catalytic Proton acceptor.

The protein belongs to the class I-like SAM-binding methyltransferase superfamily. RNA methyltransferase RlmE family. RlmM subfamily. Monomer.

The protein resides in the cytoplasm. The enzyme catalyses cytidine(2498) in 23S rRNA + S-adenosyl-L-methionine = 2'-O-methylcytidine(2498) in 23S rRNA + S-adenosyl-L-homocysteine + H(+). Functionally, catalyzes the 2'-O-methylation at nucleotide C2498 in 23S rRNA. The protein is Ribosomal RNA large subunit methyltransferase M of Salmonella gallinarum (strain 287/91 / NCTC 13346).